Consider the following 299-residue polypeptide: Protoheme IX farnesyltransferase (299 aa).

9 consecutive transmembrane segments (helical) span residues 29–49, 51–71, 100–120, 123–143, 150–170, 177–197, 223–243, 244–264, and 275–295; these read VVTL…PGAV, LQPL…AAAM, HAAT…YWLV, LTAW…TAYL, NIVI…TAVT, GLLL…ALAI, CIFL…LVGM, SGAL…YKAW, and AMDV…LLLV.

The protein belongs to the UbiA prenyltransferase family. Protoheme IX farnesyltransferase subfamily.

The protein resides in the cell inner membrane. The catalysed reaction is heme b + (2E,6E)-farnesyl diphosphate + H2O = Fe(II)-heme o + diphosphate. It functions in the pathway porphyrin-containing compound metabolism; heme O biosynthesis; heme O from protoheme: step 1/1. In terms of biological role, converts heme B (protoheme IX) to heme O by substitution of the vinyl group on carbon 2 of heme B porphyrin ring with a hydroxyethyl farnesyl side group. This chain is Protoheme IX farnesyltransferase, found in Shewanella amazonensis (strain ATCC BAA-1098 / SB2B).